Here is a 141-residue protein sequence, read N- to C-terminus: Hemoglobin subunit alpha-A (141 aa).

A Globin domain is found at 1–141; the sequence is VLSGPDKTNV…VGAVLTAKYR (141 aa). His58 lines the O2 pocket. His87 is a binding site for heme b.

The protein belongs to the globin family. As to quaternary structure, heterotetramer of two alpha chains and two beta chains. In terms of tissue distribution, red blood cells.

Functionally, involved in oxygen transport from the lung to the various peripheral tissues. The chain is Hemoglobin subunit alpha-A (HBAA) from Rhea americana (Greater rhea).